A 111-amino-acid polypeptide reads, in one-letter code: Cytochrome bo(3) ubiquinol oxidase subunit 4 (111 aa).

The Cytoplasmic portion of the chain corresponds to 1-17 (MSSAAHDNHGAGHGSLG). Residues 18-38 (SYAIGFVLSVILTAIPFYMVM) traverse the membrane as a helical segment. Residues 39-46 (DGGFSRHA) are Periplasmic-facing. The chain crosses the membrane as a helical span at residues 47 to 67 (TILTMVVLGLVQVVVHLICFL). Residues 68–80 (HMNMSSEGRWNVM) are Cytoplasmic-facing. The chain crosses the membrane as a helical span at residues 81–101 (AFIFTVIVILLVVGLSLWIIF). Residues 102–111 (SADMLMMPMP) are Periplasmic-facing.

The protein belongs to the cytochrome c oxidase bacterial subunit 4 family. Heterooctamer of two A chains, two B chains, two C chains and two D chains.

The protein resides in the cell inner membrane. Its function is as follows. Cytochrome bo(3) ubiquinol terminal oxidase is the component of the aerobic respiratory chain of E.coli that predominates when cells are grown at high aeration. Has proton pump activity across the membrane in addition to electron transfer, pumping 2 protons/electron. The polypeptide is Cytochrome bo(3) ubiquinol oxidase subunit 4 (cyoD) (Pseudomonas aeruginosa (strain ATCC 15692 / DSM 22644 / CIP 104116 / JCM 14847 / LMG 12228 / 1C / PRS 101 / PAO1)).